Reading from the N-terminus, the 162-residue chain is NADH-quinone oxidoreductase subunit I (162 aa).

4Fe-4S ferredoxin-type domains are found at residues 52 to 82 and 93 to 122; these read LRRYPNGEERCIACKLCEAICPAQAITIEAG and TRYDIDMVKCIYCGFCQEACPVDAIVEGPN. The [4Fe-4S] cluster site is built by C62, C65, C68, C72, C102, C105, C108, and C112.

Belongs to the complex I 23 kDa subunit family. As to quaternary structure, NDH-1 is composed of 14 different subunits. Subunits NuoA, H, J, K, L, M, N constitute the membrane sector of the complex. [4Fe-4S] cluster serves as cofactor.

It localises to the cell inner membrane. The catalysed reaction is a quinone + NADH + 5 H(+)(in) = a quinol + NAD(+) + 4 H(+)(out). Its function is as follows. NDH-1 shuttles electrons from NADH, via FMN and iron-sulfur (Fe-S) centers, to quinones in the respiratory chain. The immediate electron acceptor for the enzyme in this species is believed to be ubiquinone. Couples the redox reaction to proton translocation (for every two electrons transferred, four hydrogen ions are translocated across the cytoplasmic membrane), and thus conserves the redox energy in a proton gradient. This chain is NADH-quinone oxidoreductase subunit I, found in Azorhizobium caulinodans (strain ATCC 43989 / DSM 5975 / JCM 20966 / LMG 6465 / NBRC 14845 / NCIMB 13405 / ORS 571).